Consider the following 279-residue polypeptide: Lectin 9 (279 aa).

Positions 1-23 (MALSSALIKIFITFLFLQNHVNS) are cleaved as a signal peptide. N-linked (GlcNAc...) asparagine glycans are attached at residues Asn-116, Asn-139, Asn-235, and Asn-272.

This sequence belongs to the leguminous lectin family.

Its function is as follows. May be involved in arbuscular mycorrhizal (AM) symbiosis with AM fungi. This is Lectin 9 from Medicago truncatula (Barrel medic).